The following is a 252-amino-acid chain: 2-succinyl-6-hydroxy-2,4-cyclohexadiene-1-carboxylate synthase (252 aa).

This sequence belongs to the AB hydrolase superfamily. MenH family. Monomer.

It catalyses the reaction 5-enolpyruvoyl-6-hydroxy-2-succinyl-cyclohex-3-ene-1-carboxylate = (1R,6R)-6-hydroxy-2-succinyl-cyclohexa-2,4-diene-1-carboxylate + pyruvate. Its pathway is quinol/quinone metabolism; 1,4-dihydroxy-2-naphthoate biosynthesis; 1,4-dihydroxy-2-naphthoate from chorismate: step 3/7. It participates in quinol/quinone metabolism; menaquinone biosynthesis. In terms of biological role, catalyzes a proton abstraction reaction that results in 2,5-elimination of pyruvate from 2-succinyl-5-enolpyruvyl-6-hydroxy-3-cyclohexene-1-carboxylate (SEPHCHC) and the formation of 2-succinyl-6-hydroxy-2,4-cyclohexadiene-1-carboxylate (SHCHC). The chain is 2-succinyl-6-hydroxy-2,4-cyclohexadiene-1-carboxylate synthase from Salmonella typhi.